The primary structure comprises 169 residues: Ribosome maturation factor RimM (169 aa).

Positions 94–168 constitute a PRC barrel domain; that stretch reads DDEFYHADLI…RIVADPPEGL (75 aa).

The protein belongs to the RimM family. As to quaternary structure, binds ribosomal protein uS19.

It localises to the cytoplasm. In terms of biological role, an accessory protein needed during the final step in the assembly of 30S ribosomal subunit, possibly for assembly of the head region. Essential for efficient processing of 16S rRNA. May be needed both before and after RbfA during the maturation of 16S rRNA. It has affinity for free ribosomal 30S subunits but not for 70S ribosomes. This chain is Ribosome maturation factor RimM, found in Cereibacter sphaeroides (strain ATCC 17023 / DSM 158 / JCM 6121 / CCUG 31486 / LMG 2827 / NBRC 12203 / NCIMB 8253 / ATH 2.4.1.) (Rhodobacter sphaeroides).